The primary structure comprises 152 residues: Small ribosomal subunit protein uS15 (152 aa).

Residues 1–20 are disordered; it reads MNKRRANGSSHSTRPVRTGS.

The protein belongs to the universal ribosomal protein uS15 family. Part of the 30S ribosomal subunit.

This chain is Small ribosomal subunit protein uS15, found in Metallosphaera sedula (strain ATCC 51363 / DSM 5348 / JCM 9185 / NBRC 15509 / TH2).